The following is a 463-amino-acid chain: Asparagine--tRNA ligase (463 aa).

Belongs to the class-II aminoacyl-tRNA synthetase family. Homodimer.

It localises to the cytoplasm. It catalyses the reaction tRNA(Asn) + L-asparagine + ATP = L-asparaginyl-tRNA(Asn) + AMP + diphosphate + H(+). This chain is Asparagine--tRNA ligase, found in Alkaliphilus metalliredigens (strain QYMF).